We begin with the raw amino-acid sequence, 221 residues long: D-glycero-alpha-D-manno-heptose 1-phosphate guanylyltransferase (221 aa).

Belongs to the D-alpha-D-heptose-1-P guanylyltransferase family.

The catalysed reaction is D-glycero-alpha-D-manno-heptose 1-phosphate + GTP + H(+) = GDP-D-glycero-alpha-D-manno-heptose + diphosphate. Its pathway is nucleotide-sugar biosynthesis; GDP-D-glycero-alpha-D-manno-heptose biosynthesis; GDP-D-glycero-alpha-D-manno-heptose from D-glycero-alpha-D-manno-heptose 7-phosphate: step 3/3. It functions in the pathway capsule biogenesis; capsule polysaccharide biosynthesis. In terms of biological role, catalyzes the GDP transfer from GTP to D-glycero-alpha-D-manno-heptose 1-phosphate, yielding GDP-D-alpha-D-heptose. Is able to use ATP, CTP or UTP as substrate in the presence of pyrophosphatase, but at a significantly slower rate. Can also form GDP-alpha-D-mannose from alpha-D-mannose 1-phosphate and GTP. In Campylobacter jejuni subsp. jejuni serotype O:2 (strain ATCC 700819 / NCTC 11168), this protein is D-glycero-alpha-D-manno-heptose 1-phosphate guanylyltransferase.